The chain runs to 360 residues: uncharacterized protein (360 aa).

Residues 45-148 (EDIEDKILQI…KNKTYVSITP (104 aa)) form the THUMP domain.

This is an uncharacterized protein from Methanocaldococcus jannaschii (strain ATCC 43067 / DSM 2661 / JAL-1 / JCM 10045 / NBRC 100440) (Methanococcus jannaschii).